Here is a 522-residue protein sequence, read N- to C-terminus: Lysine--tRNA ligase (522 aa).

The 'HIGH' region signature appears at 44 to 52 (PSGLPHIGT). A 'KMSKS' region motif is present at residues 290-294 (KISKS). K293 provides a ligand contact to ATP.

The protein belongs to the class-I aminoacyl-tRNA synthetase family.

It localises to the cytoplasm. The catalysed reaction is tRNA(Lys) + L-lysine + ATP = L-lysyl-tRNA(Lys) + AMP + diphosphate. The protein is Lysine--tRNA ligase of Rickettsia conorii (strain ATCC VR-613 / Malish 7).